A 625-amino-acid polypeptide reads, in one-letter code: Thrombopoietin receptor (625 aa).

The signal sequence occupies residues 1 to 25; the sequence is MPSWALFMVTSCLLLALPNQAQVTS. Residues 26 to 482 lie on the Extracellular side of the membrane; it reads QDVFLLALGT…RVSTGSETAW (457 aa). An N-linked (GlcNAc...) asparagine glycan is attached at N117. Fibronectin type-III domains are found at residues 178–270 and 383–479; these read NATA…PVTV and PTPS…TGSE. Positions 465–469 match the WSXWS motif motif; the sequence is WSAWS. A helical transmembrane segment spans residues 483 to 504; sequence ITLVTALLLVLSLSALLGLLLL. Residues 505–625 lie on the Cytoplasmic side of the membrane; the sequence is KWQFPAHYRR…YLPLSYWQQP (121 aa). The Box 1 motif signature appears at 519-527; sequence LWPSLPDLH. Glycyl lysine isopeptide (Lys-Gly) (interchain with G-Cter in ubiquitin) cross-links involve residues K544 and K564. Phosphotyrosine is present on residues Y616 and Y621.

It belongs to the type I cytokine receptor family. Type 1 subfamily. Homodimer. Interacts with ATXN2L. Interacts with JAK2 and TYK2; these interactions increase MPL localization to the cell membrane. Interacts with THPO. Interacts with SHIP/INPP5D. Interacts with kinases BTK and SYK. In terms of processing, ubiquitination at Lys-544 and Lys-564 targets MPL for degradation by both the lysosomal and proteasomal pathways. The E3 ubiquitin-protein ligase CBL significantly contributes to this ubiquitination.

The protein resides in the cell membrane. The protein localises to the golgi apparatus. It localises to the cell surface. In terms of biological role, receptor for thrombopoietin that regulates hematopoietic stem cell renewal, megakaryocyte differentiation, and platelet formation. Upon activation by THPO, induces rapid tyrosine phosphorylation and activation of JAK2, providing docking sites for many signaling proteins such as STAT5, SHIP/INPP5D, GRB2, SOS1 and PI3K. In turn, These signaling cascades lead to the proliferation, survival, and differentiation of megakaryocytes, ultimately leading to increased platelet production. Acts as an inhibitor of thrombopoietin signaling by promoting protein down-regulation of full-length isoform Mpl-fl. The protein is Thrombopoietin receptor (Mpl) of Mus musculus (Mouse).